The sequence spans 142 residues: MAKKVAGQLKLQVPAGAANPSPPIGPALGQRGINIMEFCKAFNAASQEMEKGSPIPVLITYYQDKSFTFVMKTPPVTYFLKKAANLKSGSKTPGKASAGTITRDKVRAIAEAKMKDLNAADVEAAMRMIEGSARSMGLEVVG.

It belongs to the universal ribosomal protein uL11 family. Part of the ribosomal stalk of the 50S ribosomal subunit. Interacts with L10 and the large rRNA to form the base of the stalk. L10 forms an elongated spine to which L12 dimers bind in a sequential fashion forming a multimeric L10(L12)X complex. One or more lysine residues are methylated.

Forms part of the ribosomal stalk which helps the ribosome interact with GTP-bound translation factors. This chain is Large ribosomal subunit protein uL11, found in Brucella abortus (strain S19).